The primary structure comprises 261 residues: Claudin-18 (261 aa).

The Cytoplasmic segment spans residues 1–6; sequence MSTTRC. The helical transmembrane segment at 7–27 threads the bilayer; the sequence is QVVGFLLSILGLAGCIVATEM. Over 28–80 the chain is Extracellular; the sequence is DMWSTQDLYDNPVTAVFQYEGLWRSCVQQSSGFTECRPYLTILGLPAMLQAVR. Residues 81–101 traverse the membrane as a helical segment; the sequence is ALMIVGIVLSVIGLLVAIFAL. The Cytoplasmic portion of the chain corresponds to 102 to 122; it reads KCIRMGNMDDSAKAKMTLTSG. A helical membrane pass occupies residues 123–143; that stretch reads IMFIIAGLCAIAGVSVFANML. Residues 144–174 are Extracellular-facing; sequence VTNFWMSTASMFTSMGGMVQTVQTRYTFGAA. Residues 175–195 form a helical membrane-spanning segment; that stretch reads LFVGWVAGGLTLIGGVLMCIA. The required for role in regulation of RANKL-induced osteoclast differentiation stretch occupies residues 195 to 261; that stretch reads ACRGLAPEET…QSPPSKYDYV (67 aa). Over 196–261 the chain is Cytoplasmic; that stretch reads CRGLAPEETN…QSPPSKYDYV (66 aa). Ser214 bears the Phosphoserine mark. Positions 228-261 are disordered; it reads SSGFESNTRNKKIYDGGARTEDEGQSPPSKYDYV. Residues 239–249 show a composition bias toward basic and acidic residues; it reads KIYDGGARTED.

This sequence belongs to the claudin family. In terms of assembly, interacts with TJP2/ZO-2. Interacts with TJP1/ZO-1. Interacts with YAP1 (phosphorylated); the interaction sequesters YAP1 away from the nucleus and thereby restricts transcription of YAP1 target genes. Interacts with CLDN19.

It localises to the cell junction. It is found in the tight junction. The protein resides in the cell membrane. Involved in alveolar fluid homeostasis via regulation of alveolar epithelial tight junction composition and therefore ion transport and solute permeability, potentially via downstream regulation of the actin cytoskeleton organization and beta-2-adrenergic signaling. Required for lung alveolarization and maintenance of the paracellular alveolar epithelial barrier. Acts to maintain epithelial progenitor cell proliferation and organ size, via regulation of YAP1 localization away from the nucleus and thereby restriction of YAP1 target gene transcription. Acts as a negative regulator of RANKL-induced osteoclast differentiation, potentially via relocation of TJP2/ZO-2 away from the nucleus, subsequently involved in bone resorption in response to calcium deficiency. Mediates the osteoprotective effects of estrogen, potentially via acting downstream of estrogen signaling independently of RANKL signaling pathways. The chain is Claudin-18 (CLDN18) from Bos taurus (Bovine).